Here is a 426-residue protein sequence, read N- to C-terminus: Citrate synthase (426 aa).

Catalysis depends on residues histidine 314 and aspartate 372.

The protein belongs to the citrate synthase family.

The catalysed reaction is oxaloacetate + acetyl-CoA + H2O = citrate + CoA + H(+). It functions in the pathway carbohydrate metabolism; tricarboxylic acid cycle; isocitrate from oxaloacetate: step 1/2. This Helicobacter pylori (strain J99 / ATCC 700824) (Campylobacter pylori J99) protein is Citrate synthase (gltA).